The chain runs to 87 residues: Exodeoxyribonuclease 7 small subunit (87 aa).

The protein belongs to the XseB family. As to quaternary structure, heterooligomer composed of large and small subunits.

It is found in the cytoplasm. It carries out the reaction Exonucleolytic cleavage in either 5'- to 3'- or 3'- to 5'-direction to yield nucleoside 5'-phosphates.. Its function is as follows. Bidirectionally degrades single-stranded DNA into large acid-insoluble oligonucleotides, which are then degraded further into small acid-soluble oligonucleotides. This is Exodeoxyribonuclease 7 small subunit from Halorhodospira halophila (strain DSM 244 / SL1) (Ectothiorhodospira halophila (strain DSM 244 / SL1)).